The sequence spans 147 residues: Hemoglobin subunit beta-2 (147 aa).

At V2 the chain carries N-acetylvaline. The Globin domain occupies 3–147 (HLTDAEKATV…VASALAHKYH (145 aa)). The residue at position 13 (S13) is a Phosphoserine. K18 is subject to N6-succinyllysine. S51 and S53 each carry phosphoserine. The heme b site is built by H64 and H93. R105 carries the asymmetric dimethylarginine modification. Phosphothreonine is present on T124. C126 is subject to Phosphoserine; in variant Ser-126.

This sequence belongs to the globin family. In terms of assembly, heterotetramer of two alpha chains and two beta chains. Red blood cells.

Its function is as follows. Involved in oxygen transport from the lung to the various peripheral tissues. This chain is Hemoglobin subunit beta-2, found in Rattus norvegicus (Rat).